Reading from the N-terminus, the 168-residue chain is Chorismate pyruvate-lyase (168 aa).

Residues M36, R78, L116, and E157 each coordinate substrate.

The protein belongs to the UbiC family. Monomer.

The protein resides in the cytoplasm. The catalysed reaction is chorismate = 4-hydroxybenzoate + pyruvate. It participates in cofactor biosynthesis; ubiquinone biosynthesis. In terms of biological role, removes the pyruvyl group from chorismate, with concomitant aromatization of the ring, to provide 4-hydroxybenzoate (4HB) for the ubiquinone pathway. The polypeptide is Chorismate pyruvate-lyase (Photorhabdus laumondii subsp. laumondii (strain DSM 15139 / CIP 105565 / TT01) (Photorhabdus luminescens subsp. laumondii)).